Here is a 701-residue protein sequence, read N- to C-terminus: Sodium/hydrogen exchanger 6 (701 aa).

Helical transmembrane passes span 71–91 and 103–123; these read SANLLIFILLLTLTILTIWLF and GLAMIYGLLVGLVLRYGIHVP. Residue Asn-128 is glycosylated (N-linked (GlcNAc...) asparagine). Helical transmembrane passes span 176–196, 211–231, 252–272, 278–298, 324–344, 372–392, 414–434, and 436–456; these read VTFDPEVFFNILLPPIIFYAG, ILAYAFLGTAISCFVIGSIMY, CLLFGAIVSATDPVTVLAIFH, VELYALLFGESVLNDAVAIVL, IGIFLGIFSGSFAMGAATGVV, TFLLAEAWGFTGVVAVLFCGI, FELLNFLAENFIFSYMGLTLF, and FQNHVFNPTFVVGAFVAIFLG. Residue Lys-475 forms a Glycyl lysine isopeptide (Lys-Gly) (interchain with G-Cter in ubiquitin) linkage. A run of 2 helical transmembrane segments spans residues 479–499 and 515–535; these read NFQHMMMFAGLRGAMAFALAI and LLIVFFTVWVFGGGTTAMLSC.

The protein belongs to the monovalent cation:proton antiporter 1 (CPA1) transporter (TC 2.A.36) family. Homodimer. Interacts with RACK1; regulates the distribution of SLC9A6 between endosomes and the plasma membrane. Post-translationally, ubiquitinated (in vitro). In terms of processing, glycosylated. Ubiquitous. High expression in brain, skeletal muscle, and heart, but is also detected at lower levels in most other tissues.

Its subcellular location is the endosome membrane. It localises to the recycling endosome membrane. It is found in the early endosome membrane. The protein localises to the late endosome membrane. The protein resides in the cell membrane. The enzyme catalyses Na(+)(in) + H(+)(out) = Na(+)(out) + H(+)(in). It catalyses the reaction K(+)(in) + H(+)(out) = K(+)(out) + H(+)(in). Endosomal Na(+), K(+)/H(+) antiporter. Mediates the electroneutral exchange of endosomal luminal H(+) for a cytosolic Na(+) or K(+). By facilitating proton efflux, SLC9A6 counteracts the acidity generated by vacuolar (V)-ATPase, thereby limiting luminal acidification. Responsible for alkalizing and maintaining the endosomal pH, and consequently in, e.g., endosome maturation and trafficking of recycling endosomal cargo. Plays a critical role during neurodevelopment by regulating synaptic development and plasticity. Implicated in the maintenance of cell polarity in a manner that is dependent on its ability to modulate intravesicular pH. Regulates intracelular pH in some specialized cells, osteoclasts and stereocilia where this transporter localizes to the plasma membrane. The sequence is that of Sodium/hydrogen exchanger 6 from Homo sapiens (Human).